A 179-amino-acid polypeptide reads, in one-letter code: Large ribosomal subunit protein uL5 (179 aa).

It belongs to the universal ribosomal protein uL5 family. Part of the 50S ribosomal subunit; part of the 5S rRNA/L5/L18/L25 subcomplex. Contacts the 5S rRNA and the P site tRNA. Forms a bridge to the 30S subunit in the 70S ribosome.

Its function is as follows. This is one of the proteins that bind and probably mediate the attachment of the 5S RNA into the large ribosomal subunit, where it forms part of the central protuberance. In the 70S ribosome it contacts protein S13 of the 30S subunit (bridge B1b), connecting the 2 subunits; this bridge is implicated in subunit movement. Contacts the P site tRNA; the 5S rRNA and some of its associated proteins might help stabilize positioning of ribosome-bound tRNAs. The sequence is that of Large ribosomal subunit protein uL5 from Nitrosospira multiformis (strain ATCC 25196 / NCIMB 11849 / C 71).